The following is a 169-amino-acid chain: Thaumatin-like pathogenesis-related protein 2 (169 aa).

The signal sequence occupies residues 1 to 21; the sequence is MATSSAVLFFLLAVFAAGASA.

The protein belongs to the thaumatin family.

Its function is as follows. Associated with resistance against stem rust fungi. This chain is Thaumatin-like pathogenesis-related protein 2 (RASTL-2), found in Avena sativa (Oat).